The chain runs to 780 residues: Aconitate hydratase, mitochondrial (780 aa).

Residues 1 to 27 constitute a mitochondrion transit peptide; the sequence is MAPYSLLVTRLQKALGVRQYHVASVLC. N6-succinyllysine is present on Lys-31. Lys-50 carries the post-translational modification N6-acetyllysine; alternate. Lys-50 is modified (N6-succinyllysine; alternate). Gln-99 is a substrate binding site. N6-acetyllysine; alternate occurs at positions 138 and 144. An N6-succinyllysine; alternate mark is found at Lys-138 and Lys-144. 192–194 contacts substrate; that stretch reads DSH. An N6-acetyllysine; alternate modification is found at Lys-233. Lys-233 is modified (N6-succinyllysine; alternate). Cys-385 serves as a coordination point for [4Fe-4S] cluster. Position 411 is an N6-succinyllysine (Lys-411). The [4Fe-4S] cluster site is built by Cys-448 and Cys-451. The substrate site is built by Arg-474 and Arg-479. The span at 528–537 shows a compositional bias: basic and acidic residues; the sequence is DADELPKGEF. The interval 528-560 is disordered; the sequence is DADELPKGEFDPGQDTYQHPPKDSSGQHVDVSP. N6-succinyllysine is present on Lys-549. Residues 551–560 show a composition bias toward polar residues; sequence SSGQHVDVSP. Residue Ser-559 is modified to Phosphoserine. At Lys-573 the chain carries N6-acetyllysine; alternate. N6-succinyllysine; alternate is present on Lys-573. 2 positions are modified to N6-succinyllysine: Lys-577 and Lys-591. Lys-605 bears the N6-acetyllysine; alternate mark. Lys-605 carries the post-translational modification N6-succinyllysine; alternate. Arg-607 lines the substrate pocket. The residue at position 628 (Lys-628) is an N6-succinyllysine. Ser-670 carries the phosphoserine modification. 670–671 provides a ligand contact to substrate; sequence SR. An N6-succinyllysine modification is found at Lys-689. 2 positions are modified to N6-acetyllysine; alternate: Lys-723 and Lys-730. 2 positions are modified to N6-succinyllysine; alternate: Lys-723 and Lys-730. N6-acetyllysine is present on residues Lys-736, Lys-739, and Lys-743.

Belongs to the aconitase/IPM isomerase family. Monomer. It depends on [4Fe-4S] cluster as a cofactor. In terms of processing, forms covalent cross-links mediated by transglutaminase TGM2, between a glutamine and the epsilon-amino group of a lysine residue, forming homopolymers and heteropolymers.

The protein localises to the mitochondrion. The enzyme catalyses citrate = D-threo-isocitrate. Its pathway is carbohydrate metabolism; tricarboxylic acid cycle; isocitrate from oxaloacetate: step 2/2. Its function is as follows. Catalyzes the isomerization of citrate to isocitrate via cis-aconitate. The protein is Aconitate hydratase, mitochondrial (ACO2) of Homo sapiens (Human).